The chain runs to 417 residues: NADH-quinone oxidoreductase subunit D (417 aa).

It belongs to the complex I 49 kDa subunit family. NDH-1 is composed of 14 different subunits. Subunits NuoB, C, D, E, F, and G constitute the peripheral sector of the complex.

The protein localises to the cell inner membrane. It catalyses the reaction a quinone + NADH + 5 H(+)(in) = a quinol + NAD(+) + 4 H(+)(out). Its function is as follows. NDH-1 shuttles electrons from NADH, via FMN and iron-sulfur (Fe-S) centers, to quinones in the respiratory chain. The immediate electron acceptor for the enzyme in this species is believed to be ubiquinone. Couples the redox reaction to proton translocation (for every two electrons transferred, four hydrogen ions are translocated across the cytoplasmic membrane), and thus conserves the redox energy in a proton gradient. The chain is NADH-quinone oxidoreductase subunit D from Francisella tularensis subsp. mediasiatica (strain FSC147).